Reading from the N-terminus, the 180-residue chain is MSALTLFSVTDPQTPVWHSTDAKAIQAQLNAKGVRFERWQADRDLGANPSPETVIAAYQHAIDKLVAEKGYQSWDVISLRADNPQKEALREKFLNEHTHGEDEVRFFVEGAGLFCLHIGDEVFQVLCEKNDLISVPAHTPHWFDMGSEPNFTAIRIFDNPEGWIAQFTGDDIASAYPRLA.

The Fe(2+) site is built by His97, His99, Glu103, and His141. His97, His99, Glu103, and His141 together coordinate Ni(2+).

This sequence belongs to the acireductone dioxygenase (ARD) family. As to quaternary structure, monomer. Fe(2+) serves as cofactor. Requires Ni(2+) as cofactor.

It carries out the reaction 1,2-dihydroxy-5-(methylsulfanyl)pent-1-en-3-one + O2 = 3-(methylsulfanyl)propanoate + CO + formate + 2 H(+). It catalyses the reaction 1,2-dihydroxy-5-(methylsulfanyl)pent-1-en-3-one + O2 = 4-methylsulfanyl-2-oxobutanoate + formate + 2 H(+). It participates in amino-acid biosynthesis; L-methionine biosynthesis via salvage pathway; L-methionine from S-methyl-5-thio-alpha-D-ribose 1-phosphate: step 5/6. Functionally, catalyzes 2 different reactions between oxygen and the acireductone 1,2-dihydroxy-3-keto-5-methylthiopentene (DHK-MTPene) depending upon the metal bound in the active site. Fe-containing acireductone dioxygenase (Fe-ARD) produces formate and 2-keto-4-methylthiobutyrate (KMTB), the alpha-ketoacid precursor of methionine in the methionine recycle pathway. Ni-containing acireductone dioxygenase (Ni-ARD) produces methylthiopropionate, carbon monoxide and formate, and does not lie on the methionine recycle pathway. The protein is Acireductone dioxygenase of Klebsiella pneumoniae subsp. pneumoniae (strain ATCC 700721 / MGH 78578).